Reading from the N-terminus, the 148-residue chain is MSEKNENVYDLSFFMPGKTIEAEEIKVPISKRFVDKKGNVIPFILKPITTERIDELEKENTTFKNVKGRGRVKDLDSQRFYARIAIESTIYPDFRSKDLREAYKTADPVEVAKRVLSVGGEYANWLNKAIEINGFEDDLEDLEEEAKN.

This sequence to B.subtilis YqbN.

The chain is Phage-like element PBSX protein XkdN (xkdN) from Bacillus subtilis (strain 168).